The primary structure comprises 503 residues: Cytochrome P450 3A14 (503 aa).

Cys-442 contributes to the heme binding site.

It belongs to the cytochrome P450 family. Heme serves as cofactor.

It is found in the endoplasmic reticulum membrane. It localises to the microsome membrane. It carries out the reaction an organic molecule + reduced [NADPH--hemoprotein reductase] + O2 = an alcohol + oxidized [NADPH--hemoprotein reductase] + H2O + H(+). Cytochromes P450 are a group of heme-thiolate monooxygenases. In liver microsomes, this enzyme is involved in an NADPH-dependent electron transport pathway. It oxidizes a variety of structurally unrelated compounds, including steroids, fatty acids, and xenobiotics. This Cavia porcellus (Guinea pig) protein is Cytochrome P450 3A14 (CYP3A14).